The primary structure comprises 216 residues: Major fimbrial subunit (216 aa).

A signal peptide spans 1–20; it reads MKKTLLGSLILLAFAGNVQA. A disulfide bridge connects residues C41 and C81.

This sequence belongs to the fimbrial protein family.

It localises to the fimbrium. Functionally, mediates adherence to oropharyngeal epithelial cells. Helps the airway colonization process. In Haemophilus influenzae, this protein is Major fimbrial subunit (hifA).